Here is a 923-residue protein sequence, read N- to C-terminus: MGSGAGELGRAERLPVLFLFLLSLFCPALCEQIRYRIPEEMPKGSVVGNLATDLGFSVQELPTRKLRVSSEKPYFTVSAESGELLVSSRLDREEICGKKPACALEFEAVAENPLNFYHVNVEIEDINDHTPKFTQNSFELQISESAQPGTRFILGSAHDADIGSNTLQNYQLSPSDHFSLINKEKSDGSKYPEMVLKTPLDREKQKSYHLTLTALDFGAPPLSSTAQIHVLVTDANDNAPVFSQDIYRVSLSENVYPGTTVLQVTATDQDEGVNAEITFSFSEASQITQFDLNSNTGEITVLNTLDFEEVKEYSIVLEARDGGGMIAQCTVEVEVIDENDNAPEVIFQSLPNLIMEDAELGTHIALLKVRDKDSRHNGEVTCKLEGDVPFKILTSSRNTYKLVTDAVLDREQNPEYNITVTARDRGKPPLSSSSSITLHIGDVNDNAPVFSQSSYIVHVAENNPPGASISQVSASDPDLGPNGQVSYCIIASDLEQRELSSYVSISAESGVVFAQRAFDHEQLRAFELTLQARDQGSPALSANVSLRVLVDDRNDNAPRVLYPALGPDGSALFDMVPRAAEPGYLVTKVVAVDADSGHNAWLSYHVLQASEPGLFSLGLRTGEVRTARALGDRDAVRQRLLVAVRDGGQPPLSATATLHLVFADSLQEVLPDITDRPDPSDLEAELQFYLVVALALISVLFLVAMILAIALRLRRSSSPASWSCFQPGLCVKSESVVPPNYSEGTLPYSYNLCVAHTGKTEFNFLKCNEQLSSGQDILCGDSSGALFPLCNSSELTSHQQAPPNTDWRFSQAQRPGTSGSQNGDDTGTWPNNQFDTEMLQAMILASASEAADGSSTLGGGAGTMGLSARYGPQFTLQHVPDYRQNVYIPGSNATLTNAAGKRDGKAPAGGNGNKKKSGKKEKK.

The N-terminal stretch at 1–30 (MGSGAGELGRAERLPVLFLFLLSLFCPALC) is a signal peptide. 6 Cadherin domains span residues 31–133 (EQIR…TPKF), 134–242 (TQNS…APVF), 243–345 (SQDI…APEV), 346–450 (IFQS…APVF), 451–560 (SQSS…APRV), and 568–673 (DGSA…LPDI). Residues 31–689 (EQIRYRIPEE…SDLEAELQFY (659 aa)) are Extracellular-facing. 2 N-linked (GlcNAc...) asparagine glycosylation sites follow: Asn-417 and Asn-543. The helical transmembrane segment at 690–710 (LVVALALISVLFLVAMILAIA) threads the bilayer. At 711 to 923 (LRLRRSSSPA…KKKSGKKEKK (213 aa)) the chain is on the cytoplasmic side. 2 disordered regions span residues 797–832 (SHQQ…WPNN) and 893–923 (ATLT…KEKK). Residues 913 to 923 (NKKKSGKKEKK) show a composition bias toward basic residues.

It is found in the cell membrane. Potential calcium-dependent cell-adhesion protein. May be involved in the establishment and maintenance of specific neuronal connections in the brain. This chain is Protocadherin gamma-B4 (PCDHGB4), found in Pan troglodytes (Chimpanzee).